The following is a 435-amino-acid chain: Chaperone SurA (435 aa).

Residues 1 to 29 form the signal peptide; that stretch reads MINKTLHTKHTLLGLLAMAVLMIPVWSQA. 2 PpiC domains span residues 180–281 and 290–390; these read QEDF…KMID and VTQY…RVDD.

It localises to the periplasm. The catalysed reaction is [protein]-peptidylproline (omega=180) = [protein]-peptidylproline (omega=0). In terms of biological role, chaperone involved in the correct folding and assembly of outer membrane proteins. Recognizes specific patterns of aromatic residues and the orientation of their side chains, which are found more frequently in integral outer membrane proteins. May act in both early periplasmic and late outer membrane-associated steps of protein maturation. This is Chaperone SurA from Alcanivorax borkumensis (strain ATCC 700651 / DSM 11573 / NCIMB 13689 / SK2).